Here is a 483-residue protein sequence, read N- to C-terminus: Chromosomal replication initiator protein DnaA (483 aa).

The interval 1 to 71 (MKEFWQTCVS…EALAAEWYQR (71 aa)) is domain I, interacts with DnaA modulators. Residues 71–145 (RPVQVQFELP…DAANIVYERS (75 aa)) form a domain II region. Residues 146 to 362 (RLNTDLTFEN…GALRKVLAYA (217 aa)) are domain III, AAA+ region. Gly190, Gly192, Lys193, and Thr194 together coordinate ATP. A domain IV, binds dsDNA region spans residues 363 to 483 (RFHGREALNV…LHVLEQTLKG (121 aa)).

The protein belongs to the DnaA family. As to quaternary structure, oligomerizes as a right-handed, spiral filament on DNA at oriC.

Its subcellular location is the cytoplasm. In terms of biological role, plays an essential role in the initiation and regulation of chromosomal replication. ATP-DnaA binds to the origin of replication (oriC) to initiate formation of the DNA replication initiation complex once per cell cycle. Binds the DnaA box (a 9 base pair repeat at the origin) and separates the double-stranded (ds)DNA. Forms a right-handed helical filament on oriC DNA; dsDNA binds to the exterior of the filament while single-stranded (ss)DNA is stabiized in the filament's interior. The ATP-DnaA-oriC complex binds and stabilizes one strand of the AT-rich DNA unwinding element (DUE), permitting loading of DNA polymerase. After initiation quickly degrades to an ADP-DnaA complex that is not apt for DNA replication. Binds acidic phospholipids. The sequence is that of Chromosomal replication initiator protein DnaA from Bordetella avium (strain 197N).